Here is a 177-residue protein sequence, read N- to C-terminus: MVIEVVRIGQRLVRDDRVTTHVALVSRAFGAERIFMTEINPEIKDTLGKINDTWGGNFEIEFIDSWKPIVKKKKEEGFKIVHLSMYGEKINDAQEEIRKEENLLIVVGAEKVPREIYELADFNVGVGSQPHSEISALAILLDRIQGGQQFEKEFPNAKRKIIPTKTGKNVQVKETRD.

S-adenosyl-L-methionine is bound by residues L83 and 108-112 (GAEKV).

This sequence belongs to the aTrm56 family. In terms of assembly, homodimer.

It localises to the cytoplasm. It carries out the reaction cytidine(56) in tRNA + S-adenosyl-L-methionine = 2'-O-methylcytidine(56) in tRNA + S-adenosyl-L-homocysteine + H(+). Its function is as follows. Specifically catalyzes the AdoMet-dependent 2'-O-ribose methylation of cytidine at position 56 in tRNAs. The protein is tRNA (cytidine(56)-2'-O)-methyltransferase of Nitrosopumilus maritimus (strain SCM1).